Consider the following 74-residue polypeptide: uncharacterized protein (74 aa).

The helical transmembrane segment at 52–72 (ITFGFTVLGLGIGMIFGDAGL) threads the bilayer.

The protein resides in the membrane. This is an uncharacterized protein from Methanocaldococcus jannaschii (strain ATCC 43067 / DSM 2661 / JAL-1 / JCM 10045 / NBRC 100440) (Methanococcus jannaschii).